The chain runs to 527 residues: GMP synthase [glutamine-hydrolyzing] (527 aa).

One can recognise a Glutamine amidotransferase type-1 domain in the interval 13-202 (TILVLDFGSQ…AVDICGAAQK (190 aa)). Cys89 (nucleophile) is an active-site residue. Residues His176 and Glu178 contribute to the active site. A GMPS ATP-PPase domain is found at 203 to 402 (WSMENFVDTE…MGIPHDLVWR (200 aa)). 231–237 (SGGVDST) is a binding site for ATP. XMP is bound by residues Arg304, Asp464, Lys519, and Glu525.

Homodimer. The cofactor is Mg(2+).

It is found in the cytoplasm. Its subcellular location is the cytosol. The enzyme catalyses XMP + L-glutamine + ATP + H2O = GMP + L-glutamate + AMP + diphosphate + 2 H(+). It participates in purine metabolism; GMP biosynthesis; GMP from XMP (L-Gln route): step 1/1. Catalyzes the conversion of xanthine monophosphate (XMP) to GMP in the presence of glutamine and ATP through an adenyl-XMP intermediate. The polypeptide is GMP synthase [glutamine-hydrolyzing] (GUA1) (Yarrowia lipolytica (strain CLIB 122 / E 150) (Yeast)).